A 712-amino-acid chain; its full sequence is Phosphatase and actin regulator 4 (712 aa).

Disordered regions lie at residues 1–22 and 90–405; these read MGQA…GQPT and RGLL…EVPK. The RPEL 1 repeat unit spans residues 72–97; the sequence is EVLERKISMRKPREELVKRGLLLEDS. Over residues 114–124 the composition is skewed to polar residues; the sequence is NGHTTLIGSTR. Phosphoserine occurs at positions 125, 127, 140, and 156. The span at 136–152 shows a compositional bias: basic and acidic residues; the sequence is ERIASLRKPVPEEEPKK. The segment covering 198-230 has biased composition (low complexity); it reads ATSSGSLARPSSSASTTAITTAPAATMAATNPA. The span at 233–243 shows a compositional bias: polar residues; that stretch reads VHSSGPPSQAP. A compositionally biased stretch (low complexity) spans 245-267; it reads TLPAAPASTHTTATLSLTHTGPA. Residues Ser-282, Ser-303, and Ser-353 each carry the phosphoserine modification. Over residues 345 to 357 the composition is skewed to low complexity; the sequence is SEPLLTPSSSPLP. Residues 358–371 are compositionally biased toward pro residues; that stretch reads AHIPPEPPQSPPFP. Residue Ser-436 is modified to Phosphoserine. At Thr-441 the chain carries Phosphothreonine. Residues Ser-452, Ser-462, Ser-473, Ser-524, Ser-526, Ser-567, and Ser-600 each carry the phosphoserine modification. Positions 507-557 are disordered; sequence VIPKLPQCLQEEEEGKESDSDSEGPIQYRDEEDEDESHHSALANKVKRKDT. Residues 516–528 show a composition bias toward acidic residues; the sequence is QEEEEGKESDSDS. RPEL repeat units lie at residues 593-618 and 631-656; these read NTLI…QPKN and RRLT…RFNE. The segment at 602-626 is disordered; the sequence is RPTPEELEQRNILQPKNEADRQAEK. The residue at position 638 (Ser-638) is a Phosphoserine.

The protein belongs to the phosphatase and actin regulator family. In terms of assembly, binds PPP1CA and actin.

Its subcellular location is the cytoplasm. It is found in the cell projection. The protein localises to the lamellipodium. In terms of biological role, regulator of protein phosphatase 1 (PP1) required for neural tube and optic fissure closure, and enteric neural crest cell (ENCCs) migration during development. Acts as an activator of PP1 by interacting with PPP1CA and preventing phosphorylation of PPP1CA at 'Thr-320'. During neural tube closure, localizes to the ventral neural tube and activates PP1, leading to down-regulate cell proliferation within cranial neural tissue and the neural retina. Also acts as a regulator of migration of enteric neural crest cells (ENCCs) by activating PP1, leading to dephosphorylation and subsequent activation of cofilin (COF1 or COF2) and repression of the integrin signaling through the RHO/ROCK pathway. The protein is Phosphatase and actin regulator 4 (PHACTR4) of Bos taurus (Bovine).